The chain runs to 625 residues: Archaeosine synthase subunit alpha (625 aa).

The PUA domain occupies Lys556–Lys624.

It belongs to the archaeosine synthase type 1 family. Forms a robust complex with the archaeosine synthase beta subunit RaSEA. Formation of this complex highly increases lysine transfer activity. The complex likely consists of an alpha(2)beta(2) heterotetrameric structure.

It carries out the reaction 7-cyano-7-carbaguanosine(15) in tRNA + L-lysine = 7-N-[(5S)-5-amino-5-carboxypentyl]formamidino-7-deazaguanosine(15) in tRNA. The protein operates within tRNA modification; archaeosine-tRNA biosynthesis. Its function is as follows. Functions in the biosynthesis of archaeosine, a modified nucleoside present in the dihydrouridine loop (D-loop) of archaeal tRNAs. Catalyzes the addition of L-lysine to the cyano group of 7-cyano-7-deazaguanine (preQ0)-modified tRNAs at position 15, to generate q0kN15-tRNA, a q0N lysine adduct identified as 7-N-[(5S)-5-amino-5-carboxypentyl]formamidino-7-deazaguanosine. This chain is Archaeosine synthase subunit alpha, found in Methanosarcina acetivorans (strain ATCC 35395 / DSM 2834 / JCM 12185 / C2A).